The primary structure comprises 793 residues: DNA mismatch repair protein MutS (793 aa).

589 to 596 (GPNMSGKS) is a binding site for ATP.

This sequence belongs to the DNA mismatch repair MutS family.

Its function is as follows. This protein is involved in the repair of mismatches in DNA. It is possible that it carries out the mismatch recognition step. This protein has a weak ATPase activity. The sequence is that of DNA mismatch repair protein MutS from Thermotoga sp. (strain RQ2).